The chain runs to 307 residues: Synaptophysin (307 aa).

Over 1–19 (MDVVNQLVAGGQFRVVKEP) the chain is Cytoplasmic. Residues 15–222 (VVKEPLGFVK…NLWFVFKETG (208 aa)) form the MARVEL domain. The helical transmembrane segment at 20-43 (LGFVKVLQWVFAIFAFATCGSYTG) threads the bilayer. Residues 44-101 (ELRLSVECANKTESALNIEVEFEYPFRLHQVYFDAPSCVKGGTTKIFLVGDYSSSAEF) are Vesicular-facing. The N-linked (GlcNAc...) asparagine glycan is linked to asparagine 53. Tyrosine 75 carries the phosphotyrosine modification. A helical transmembrane segment spans residues 102–125 (FVTVAVFAFLYSMGALATYIFLQN). The Cytoplasmic portion of the chain corresponds to 126 to 132 (KYRENNK). A helical membrane pass occupies residues 133–156 (GPMMDFLATAVFAFMWLVSSSAWA). Residues 157-194 (KGLSDVKMATDPENIIKEMPMCRQTGNTCKELRDPVTS) are Vesicular-facing. Residues 195-218 (GLNTSVVFGFLNLVLWVGNLWFVF) form a helical membrane-spanning segment. Residues 219 to 307 (KETGWAAPFM…GAPTSFSNQM (89 aa)) are Cytoplasmic-facing. Threonine 221 carries the phosphothreonine modification. Residues 233–307 (GAPEKQPAPG…GAPTSFSNQM (75 aa)) form a disordered region. Positions 248–258 (AGYGQGPGGYG) are enriched in gly residues. The segment at 249–298 (GYGQGPGGYGPQDSYGPQGGYQPDYGQPASGGGGYGPQGDYGQQGYGQQG) is repeats, Gly-rich. Positions 259-276 (PQDSYGPQGGYQPDYGQP) are enriched in low complexity. Phosphotyrosine occurs at positions 273 and 289. Positions 277–296 (ASGGGGYGPQGDYGQQGYGQ) are enriched in gly residues.

Belongs to the synaptophysin/synaptobrevin family. Homohexamer or homotetramer. Interacts with SRCIN1. Interacts with VAMP2; the interaction is inhibited by interaction of VAPM2 with SEPT8. Post-translationally, ubiquitinated; mediated by SIAH1 or SIAH2 and leading to its subsequent proteasomal degradation. Phosphorylated by SRC. Expressed in the brain with expression in the cerebrum and the cerebellum.

The protein resides in the cytoplasmic vesicle. It localises to the secretory vesicle. Its subcellular location is the synaptic vesicle membrane. It is found in the synapse. The protein localises to the synaptosome. Its function is as follows. Possibly involved in structural functions as organizing other membrane components or in targeting the vesicles to the plasma membrane. Involved in the regulation of short-term and long-term synaptic plasticity. The sequence is that of Synaptophysin (Syp) from Rattus norvegicus (Rat).